Reading from the N-terminus, the 426-residue chain is uncharacterized protein (426 aa).

This sequence belongs to the serpin family.

This is an uncharacterized protein from Methanosarcina acetivorans (strain ATCC 35395 / DSM 2834 / JCM 12185 / C2A).